Here is a 513-residue protein sequence, read N- to C-terminus: Matrix metalloproteinase-27 (513 aa).

Residues Met-1–Ala-17 form the signal peptide. A propeptide spans Phe-18–Gln-98 (activation peptide). Asn-55 carries N-linked (GlcNAc...) asparagine glycosylation. The Cysteine switch signature appears at Pro-89–Val-96. Residue Cys-91 participates in Zn(2+) binding. Asn-110 carries an N-linked (GlcNAc...) asparagine glycan. Ca(2+) is bound by residues Asp-121 and Asp-155. A Zn(2+)-binding site is contributed by His-165. Residues Asp-173, Gly-174, and Val-178 each contribute to the Ca(2+) site. His-181 serves as a coordination point for Zn(2+). Ca(2+)-binding residues include Gly-188 and Asp-192. Zn(2+) is bound at residue His-194. Ca(2+) is bound by residues Asp-196 and Glu-199. Residue His-216 participates in Zn(2+) binding. Residue Glu-217 is part of the active site. Zn(2+) contacts are provided by His-220 and His-226. Hemopexin repeat units follow at residues Pro-276–Leu-325, Pro-326–Gly-371, Val-373–Ile-421, and Ser-422–Cys-465. Cysteines 279 and 465 form a disulfide. Asp-286 lines the Ca(2+) pocket. 2 residues coordinate Ca(2+): Asp-377 and Asp-426. N-linked (GlcNAc...) asparagine glycosylation is present at Asn-452. The segment at Lys-466–Gln-513 is required for retention in the endoplasmic reticulum.

Belongs to the peptidase M10A family. It depends on Ca(2+) as a cofactor. The cofactor is Zn(2+). Post-translationally, N-glycosylated. Expressed in B-cells. Expressed in a subset of endometrial macrophages related to menstruation and in ovarian and peritoneal endometriotic lesions (at protein level).

The protein resides in the endoplasmic reticulum. Functionally, matrix metalloproteinases degrade protein components of the extracellular matrix such as fibronectin, laminin, gelatins and/or collagens. This is Matrix metalloproteinase-27 (MMP27) from Homo sapiens (Human).